The primary structure comprises 739 residues: Cleavage and polyadenylation specificity factor subunit 2 (739 aa).

Over residues 411-423 (VKEEETKASHGSD) the composition is skewed to basic and acidic residues. The interval 411-430 (VKEEETKASHGSDDNSSEPM) is disordered.

It belongs to the metallo-beta-lactamase superfamily. RNA-metabolizing metallo-beta-lactamase-like family. CPSF2/YSH1 subfamily. In terms of assembly, component of the CPSF complex, at least composed of CPSF160, CPSF100, CPSF73-I, CPSF73-II, CPSF30, FY and FIPS5. Forms a complex with cleavage and polyadenylation specificity factor (CPSF) subunits FY, PAPS2, CSTF50, CPSF30, CPSF73-I, CPSF73-II and CPSF160.

Its subcellular location is the nucleus. The protein localises to the cytoplasm. Functionally, CPSF plays a key role in pre-mRNA 3'-end formation, recognizing the AAUAAA signal sequence and interacting with poly(A)polymerase and other factors to bring about cleavage and poly(A) addition. Required for antisense-RNA-mediated gene silencing. The sequence is that of Cleavage and polyadenylation specificity factor subunit 2 (CPSF100) from Arabidopsis thaliana (Mouse-ear cress).